Here is a 1149-residue protein sequence, read N- to C-terminus: Structural maintenance of chromosomes protein 6 homolog smc-6 (1149 aa).

77–84 (GPNGSGKS) provides a ligand contact to ATP. Residues 309–460 (LQDETKKEYA…EEEKYTIQRD (152 aa)) adopt a coiled-coil conformation. The flexible hinge stretch occupies residues 461–687 (INQLRRKIEQ…DVDEGALARL (227 aa)). A coiled-coil region spans residues 714-920 (YNERDQTKAA…AVDRATVGCD (207 aa)). Disordered stretches follow at residues 875-900 (NDKKNHPMPPGETDPPDLSSFPSTTE) and 1026-1060 (EVDEHSYDDDSDDSTGPRRKKSKKSGQKKKRVRDL). Positions 1026–1038 (EVDEHSYDDDSDD) are enriched in acidic residues. Residues 1042 to 1058 (PRRKKSKKSGQKKKRVR) show a composition bias toward basic residues.

It belongs to the SMC family. SMC6 subfamily. In terms of assembly, interacts with smc-5. Expressed in the germline (at protein level).

The protein resides in the nucleus. It localises to the chromosome. Functionally, core component of the smc-5/smc-6 complex. Involved in DNA double-strand break repair by promoting sister-chromatid homologous recombination during meiosis. Also plays a role in the DNA damage repair of ultraviolet (UV) radiation-induced DNA lesions. Promotes efficient DNA replication. This is Structural maintenance of chromosomes protein 6 homolog smc-6 from Caenorhabditis elegans.